We begin with the raw amino-acid sequence, 577 residues long: Proline--tRNA ligase (577 aa).

The protein belongs to the class-II aminoacyl-tRNA synthetase family. ProS type 1 subfamily. Homodimer.

The protein localises to the cytoplasm. The catalysed reaction is tRNA(Pro) + L-proline + ATP = L-prolyl-tRNA(Pro) + AMP + diphosphate. Functionally, catalyzes the attachment of proline to tRNA(Pro) in a two-step reaction: proline is first activated by ATP to form Pro-AMP and then transferred to the acceptor end of tRNA(Pro). As ProRS can inadvertently accommodate and process non-cognate amino acids such as alanine and cysteine, to avoid such errors it has two additional distinct editing activities against alanine. One activity is designated as 'pretransfer' editing and involves the tRNA(Pro)-independent hydrolysis of activated Ala-AMP. The other activity is designated 'posttransfer' editing and involves deacylation of mischarged Ala-tRNA(Pro). The misacylated Cys-tRNA(Pro) is not edited by ProRS. The protein is Proline--tRNA ligase of Helicobacter pylori (strain Shi470).